Reading from the N-terminus, the 563-residue chain is Arginine--tRNA ligase (563 aa).

Positions 121–131 match the 'HIGH' region motif; it reads PNIAKPFSIGH.

This sequence belongs to the class-I aminoacyl-tRNA synthetase family. As to quaternary structure, monomer.

Its subcellular location is the cytoplasm. The catalysed reaction is tRNA(Arg) + L-arginine + ATP = L-arginyl-tRNA(Arg) + AMP + diphosphate. In Streptococcus pneumoniae (strain P1031), this protein is Arginine--tRNA ligase.